The sequence spans 106 residues: Large ribosomal subunit protein uL22 (106 aa).

Belongs to the universal ribosomal protein uL22 family. Part of the 50S ribosomal subunit.

In terms of biological role, this protein binds specifically to 23S rRNA; its binding is stimulated by other ribosomal proteins, e.g. L4, L17, and L20. It is important during the early stages of 50S assembly. It makes multiple contacts with different domains of the 23S rRNA in the assembled 50S subunit and ribosome. Its function is as follows. The globular domain of the protein is located near the polypeptide exit tunnel on the outside of the subunit, while an extended beta-hairpin is found that lines the wall of the exit tunnel in the center of the 70S ribosome. This is Large ribosomal subunit protein uL22 from Nautilia profundicola (strain ATCC BAA-1463 / DSM 18972 / AmH).